The sequence spans 408 residues: Acetate kinase (408 aa).

Mg(2+) is bound at residue Asn-7. Lys-14 is a binding site for ATP. A substrate-binding site is contributed by Arg-91. Asp-148 serves as the catalytic Proton donor/acceptor. ATP is bound by residues 208-212 and 283-285; these read HLGNG and DLR. Glu-388 is a Mg(2+) binding site.

The protein belongs to the acetokinase family. In terms of assembly, homodimer. Mg(2+) serves as cofactor. Requires Mn(2+) as cofactor.

Its subcellular location is the cytoplasm. It catalyses the reaction acetate + ATP = acetyl phosphate + ADP. The protein operates within metabolic intermediate biosynthesis; acetyl-CoA biosynthesis; acetyl-CoA from acetate: step 1/2. Its function is as follows. Catalyzes the formation of acetyl phosphate from acetate and ATP. Can also catalyze the reverse reaction. This Borrelia hermsii (strain HS1 / DAH) protein is Acetate kinase.